The chain runs to 1265 residues: Nestin (1265 aa).

Residues 1 to 16 (MELLGVRQPFGPQFQE) form a head region. The tract at residues 17–52 (EKYQMLELNHRLESYLGRVKLLEEENKLLREEIHTL) is coil 1A. One can recognise an IF rod domain in the interval 17–324 (EKYQMLELNH…ALLDSEGLRI (308 aa)). The interval 53–64 (KSSRDPAGQRKA) is linker 1. A coil 1B region spans residues 65-160 (QEEALSQARR…QVHQENMETM (96 aa)). Residues 161–183 (QASLKQTKQVLMAPQRVQATSIP) form a linker 12 region. The coil 2A stretch occupies residues 184 to 203 (DLGQEYGYKAAQAWQEAANN). Positions 204 to 206 (YQK) are linker 2. Residues 207–324 (QVGRLEESLN…ALLDSEGLRI (118 aa)) form a coil 2B region. Residues 325 to 1265 (DRPTPNKTSS…EGDSWSSGDE (941 aa)) form a tail region. A compositionally biased stretch (polar residues) spans 383–402 (PSWTLTRGTPQRPPSSTSMT). 5 disordered regions span residues 383–521 (PSWT…TEVS), 667–830 (FEVE…PDME), 863–1073 (HESL…KASQ), 1093–1116 (AQTT…LESS), and 1232–1265 (IRDD…SGDE). The span at 403–418 (EKTEDHISEETKRSAE) shows a compositional bias: basic and acidic residues. Polar residues predominate over residues 422-441 (DQLQQEKVQQDWTLESTLPK). Residues 444 to 459 (AEPKPELQPEEIKVED) show a composition bias toward basic and acidic residues. Polar residues predominate over residues 479 to 496 (LTSVPAEQQGSMSQTPET). 2 stretches are compositionally biased toward acidic residues: residues 508–520 (EVSE…DTEV) and 730–739 (LNEDQSEAEE). 3 stretches are compositionally biased toward basic and acidic residues: residues 784–796 (YKSD…HIGE), 803–819 (EKER…RFNT), and 863–897 (HESL…KEED). The segment covering 901–910 (FEQNENQQLT) has biased composition (polar residues). The span at 911–935 (EHQHVHTEQVEDKPVHSHETQEHVN) shows a compositional bias: basic and acidic residues. The segment covering 943–956 (SERSQQEQLEESSL) has biased composition (low complexity). Over residues 1015–1043 (PNASQCFQNTSLLAAATPNEQPLTFTNEV) the composition is skewed to polar residues. The segment covering 1061–1070 (SEEKSTDEPK) has biased composition (basic and acidic residues). Composition is skewed to polar residues over residues 1105-1116 (SISPVNENLESS) and 1242-1251 (PAQSKIVQSD). The span at 1252–1265 (DSADEGDSWSSGDE) shows a compositional bias: acidic residues.

It belongs to the intermediate filament family. As to quaternary structure, forms homodimers and homotetramers in vitro. In mixtures with other intermediate filament proteins such as vimentin and alpha-internexin, preferentially forms heterodimers. Widely expressed throughout the developing nervous system at 24 hours post-fertilization (hpf). As development progresses, expression becomes restricted to proliferative zones of the developing and postembryonic central nervous system. In the peripheral nervous system, expressed in the cranial ganglia. Also expressed in mesodermal muscle precursor cells and in cranial mesenchymal tissue.

Promotes the disassembly of phosphorylated vimentin intermediate filaments (IF) during mitosis and may play a role in the trafficking and distribution of IF proteins and other cellular factors to daughter cells during progenitor cell division. Required for survival, renewal and mitogen-stimulated proliferation of neural progenitor cells. Required for brain and eye development. The sequence is that of Nestin (nes) from Danio rerio (Zebrafish).